The sequence spans 753 residues: Photosystem I P700 chlorophyll a apoprotein A1 (753 aa).

The next 8 membrane-spanning stretches (helical) occupy residues 73-96 (IFSA…FHAA), 159-182 (LYSA…YHYH), 198-222 (MTHH…HVSL), 294-312 (IAHH…GHMY), 349-372 (WHAQ…HHMY), 388-414 (LNLF…IFMV), 436-458 (TIIS…LYIH), and 534-552 (FMIH…LILI). [4Fe-4S] cluster contacts are provided by Cys-576 and Cys-585. The next 2 membrane-spanning stretches (helical) occupy residues 592–613 (HIFL…HFFW) and 667–689 (LSAY…MFLF). Chlorophyll a' is bound at residue His-678. The chlorophyll a site is built by Met-686 and Tyr-694. A phylloquinone-binding site is contributed by Trp-695. Residues 727-747 (AVGLGHYLLGGIVTSWSFYLA) traverse the membrane as a helical segment.

Belongs to the PsaA/PsaB family. In terms of assembly, the PsaA/B heterodimer binds the P700 chlorophyll special pair and subsequent electron acceptors. PSI consists of a core antenna complex that captures photons, and an electron transfer chain that converts photonic excitation into a charge separation. The cyanobacterial PSI reaction center is composed of one copy each of PsaA,B,C,D,E,F,I,J,K,L,M and X, and forms trimeric complexes. Requires PSI electron transfer chain: 5 chlorophyll a, 1 chlorophyll a', 2 phylloquinones and 3 4Fe-4S clusters. PSI core antenna: 90 chlorophyll a, 22 carotenoids, 3 phospholipids and 1 galactolipid. P700 is a chlorophyll a/chlorophyll a' dimer, A0 is one or more chlorophyll a, A1 is one or both phylloquinones and FX is a shared 4Fe-4S iron-sulfur center. as cofactor.

It is found in the cellular thylakoid membrane. It carries out the reaction reduced [plastocyanin] + hnu + oxidized [2Fe-2S]-[ferredoxin] = oxidized [plastocyanin] + reduced [2Fe-2S]-[ferredoxin]. Functionally, psaA and PsaB bind P700, the primary electron donor of photosystem I (PSI), as well as the electron acceptors A0, A1 and FX. PSI is a plastocyanin/cytochrome c6-ferredoxin oxidoreductase, converting photonic excitation into a charge separation, which transfers an electron from the donor P700 chlorophyll pair to the spectroscopically characterized acceptors A0, A1, FX, FA and FB in turn. Oxidized P700 is reduced on the lumenal side of the thylakoid membrane by plastocyanin or cytochrome c6. This chain is Photosystem I P700 chlorophyll a apoprotein A1, found in Acaryochloris marina (strain MBIC 11017).